The following is an 89-amino-acid chain: Small ribosomal subunit protein uS15 (89 aa).

This sequence belongs to the universal ribosomal protein uS15 family. As to quaternary structure, part of the 30S ribosomal subunit. Forms a bridge to the 50S subunit in the 70S ribosome, contacting the 23S rRNA.

Functionally, one of the primary rRNA binding proteins, it binds directly to 16S rRNA where it helps nucleate assembly of the platform of the 30S subunit by binding and bridging several RNA helices of the 16S rRNA. In terms of biological role, forms an intersubunit bridge (bridge B4) with the 23S rRNA of the 50S subunit in the ribosome. In Trichormus variabilis (strain ATCC 29413 / PCC 7937) (Anabaena variabilis), this protein is Small ribosomal subunit protein uS15.